Here is a 120-residue protein sequence, read N- to C-terminus: MSLKIRLARGGAKKRPFYRIVVADARAPRDGRFIERIGTFDPLKAKNAPDRIVLDAEKAKDWLAKGAQPTDRVARLLDGLEIIKRESRNNPQQGQPKKKAQERAAAAAAAAEKAASEAAA.

Positions 84 to 120 are disordered; the sequence is KRESRNNPQQGQPKKKAQERAAAAAAAAEKAASEAAA. Over residues 103–120 the composition is skewed to low complexity; sequence RAAAAAAAAEKAASEAAA.

Belongs to the bacterial ribosomal protein bS16 family.

This is Small ribosomal subunit protein bS16 from Beijerinckia indica subsp. indica (strain ATCC 9039 / DSM 1715 / NCIMB 8712).